A 552-amino-acid chain; its full sequence is 5'-AMP-activated protein kinase catalytic subunit alpha-2 (552 aa).

The 253-residue stretch at tyrosine 16–phenylalanine 268 folds into the Protein kinase domain. ATP is bound by residues leucine 22–valine 30 and lysine 45. Catalysis depends on aspartate 139, which acts as the Proton acceptor. Threonine 172 is modified (phosphothreonine; by LKB1 and CaMKK2). Threonine 258 is modified (phosphothreonine). The segment at glutamate 291–aspartate 376 is AIS. Residues serine 377 and serine 491 each carry the phosphoserine modification.

This sequence belongs to the protein kinase superfamily. CAMK Ser/Thr protein kinase family. SNF1 subfamily. As to quaternary structure, AMPK is a heterotrimer of an alpha catalytic subunit (PRKAA1 or PRKAA2), a beta (PRKAB1 or PRKAB2) and a gamma non-catalytic subunits (PRKAG1, PRKAG2 or PRKAG3). Interacts with FNIP1 and FNIP2. Interacts with DUSP29. Interacts with ARF6. The phosphorylated form at Thr-172 mediated by CamKK2 interacts with ACSS2. Requires Mg(2+) as cofactor. Ubiquitinated. In terms of processing, phosphorylated at Thr-172 by STK11/LKB1 in complex with STE20-related adapter-alpha (STRADA) pseudo kinase and CAB39. Also phosphorylated at Thr-172 by CAMKK2; triggered by a rise in intracellular calcium ions, without detectable changes in the AMP/ATP ratio. CAMKK1 can also phosphorylate Thr-172, but at much lower level. Dephosphorylated by protein phosphatase 2A and 2C (PP2A and PP2C). Phosphorylated by ULK1; leading to negatively regulate AMPK activity and suggesting the existence of a regulatory feedback loop between ULK1 and AMPK. Dephosphorylated by PPM1A and PPM1B at Thr-172 (mediated by STK11/LKB1).

It localises to the cytoplasm. It is found in the nucleus. It catalyses the reaction L-seryl-[protein] + ATP = O-phospho-L-seryl-[protein] + ADP + H(+). The enzyme catalyses L-threonyl-[protein] + ATP = O-phospho-L-threonyl-[protein] + ADP + H(+). The catalysed reaction is L-seryl-[acetyl-CoA carboxylase] + ATP = O-phospho-L-seryl-[acetyl-CoA carboxylase] + ADP + H(+). It carries out the reaction L-seryl-[3-hydroxy-3-methylglutaryl-coenzyme A reductase] + ATP = O-phospho-L-seryl-[3-hydroxy-3-methylglutaryl-coenzyme A reductase] + ADP + H(+). With respect to regulation, activated by phosphorylation on Thr-172. Binding of AMP to non-catalytic gamma subunit (PRKAG1, PRKAG2 or PRKAG3) results in allosteric activation, inducing phosphorylation on Thr-172. AMP-binding to gamma subunit also sustains activity by preventing dephosphorylation of Thr-172. ADP also stimulates Thr-172 phosphorylation, without stimulating already phosphorylated AMPK. ATP promotes dephosphorylation of Thr-172, rendering the enzyme inactive. Under physiological conditions AMPK mainly exists in its inactive form in complex with ATP, which is much more abundant than AMP. Selectively inhibited by compound C (6-[4-(2-Piperidin-1-yl-ethoxy)-phenyl)]-3-pyridin-4-yl-pyyrazolo[1,5-a] pyrimidine. Activated by resveratrol, a natural polyphenol present in red wine, and S17834, a synthetic polyphenol. Salicylate/aspirin directly activates kinase activity, primarily by inhibiting Thr-172 dephosphorylation. In terms of biological role, catalytic subunit of AMP-activated protein kinase (AMPK), an energy sensor protein kinase that plays a key role in regulating cellular energy metabolism. In response to reduction of intracellular ATP levels, AMPK activates energy-producing pathways and inhibits energy-consuming processes: inhibits protein, carbohydrate and lipid biosynthesis, as well as cell growth and proliferation. AMPK acts via direct phosphorylation of metabolic enzymes, and by longer-term effects via phosphorylation of transcription regulators. Regulates lipid synthesis by phosphorylating and inactivating lipid metabolic enzymes such as ACACA, ACACB, GYS1, HMGCR and LIPE; regulates fatty acid and cholesterol synthesis by phosphorylating acetyl-CoA carboxylase (ACACA and ACACB) and hormone-sensitive lipase (LIPE) enzymes, respectively. Promotes lipolysis of lipid droplets by mediating phosphorylation of isoform 1 of CHKA (CHKalpha2). Regulates insulin-signaling and glycolysis by phosphorylating IRS1, PFKFB2 and PFKFB3. Involved in insulin receptor/INSR internalization. AMPK stimulates glucose uptake in muscle by increasing the translocation of the glucose transporter SLC2A4/GLUT4 to the plasma membrane, possibly by mediating phosphorylation of TBC1D4/AS160. Regulates transcription and chromatin structure by phosphorylating transcription regulators involved in energy metabolism such as CRTC2/TORC2, FOXO3, histone H2B, HDAC5, MEF2C, MLXIPL/ChREBP, EP300, HNF4A, p53/TP53, SREBF1, SREBF2 and PPARGC1A. Acts as a key regulator of glucose homeostasis in liver by phosphorylating CRTC2/TORC2, leading to CRTC2/TORC2 sequestration in the cytoplasm. In response to stress, phosphorylates 'Ser-36' of histone H2B (H2BS36ph), leading to promote transcription. Acts as a key regulator of cell growth and proliferation by phosphorylating FNIP1, TSC2, RPTOR, WDR24 and ATG1/ULK1: in response to nutrient limitation, negatively regulates the mTORC1 complex by phosphorylating RPTOR component of the mTORC1 complex and by phosphorylating and activating TSC2. Also phosphorylates and inhibits GATOR2 subunit WDR24 in response to nutrient limitation, leading to suppress glucose-mediated mTORC1 activation. In response to energetic stress, phosphorylates FNIP1, inactivating the non-canonical mTORC1 signaling, thereby promoting nuclear translocation of TFEB and TFE3, and inducing transcription of lysosomal or autophagy genes. In response to nutrient limitation, promotes autophagy by phosphorylating and activating ATG1/ULK1. In that process, it also activates WDR45/WIPI4. Phosphorylates CASP6, thereby preventing its autoprocessing and subsequent activation. AMPK also acts as a regulator of circadian rhythm by mediating phosphorylation of CRY1, leading to destabilize it. May regulate the Wnt signaling pathway by phosphorylating CTNNB1, leading to stabilize it. Also acts as a regulator of cellular polarity by remodeling the actin cytoskeleton; probably by indirectly activating myosin. Also phosphorylates CFTR, EEF2K, KLC1, NOS3 and SLC12A1. Plays an important role in the differential regulation of pro-autophagy (composed of PIK3C3, BECN1, PIK3R4 and UVRAG or ATG14) and non-autophagy (composed of PIK3C3, BECN1 and PIK3R4) complexes, in response to glucose starvation. Can inhibit the non-autophagy complex by phosphorylating PIK3C3 and can activate the pro-autophagy complex by phosphorylating BECN1. Upon glucose starvation, promotes ARF6 activation in a kinase-independent manner leading to cell migration. Upon glucose deprivation mediates the phosphorylation of ACSS2 at 'Ser-659', which exposes the nuclear localization signal of ACSS2, required for its interaction with KPNA1 and nuclear translocation. Upon stress, regulates mitochondrial fragmentation through phosphorylation of MTFR1L. This is 5'-AMP-activated protein kinase catalytic subunit alpha-2 from Mus musculus (Mouse).